The primary structure comprises 217 residues: Oxygen regulatory protein NreC (217 aa).

A Response regulatory domain is found at 2–119 (KIVIADDHAV…QLLLAVRTVY (118 aa)). Aspartate 53 bears the 4-aspartylphosphate mark. Positions 148 to 213 (TNDPFKILSK…ELVEYALKKK (66 aa)) constitute an HTH luxR-type domain. The H-T-H motif DNA-binding region spans 172–191 (NKDIAEKLFVSVKTVEAHKT).

In terms of processing, phosphorylated by NreB.

The protein resides in the cytoplasm. Functionally, member of the two-component regulatory system NreB/NreC involved in the control of dissimilatory nitrate/nitrite reduction in response to oxygen. Phosphorylated NreC binds to a GC-rich palindromic sequence at the promoters of the nitrate (narGHJI) and nitrite (nir) reductase operons, as well as the putative nitrate transporter gene narT, and activates their expression. This Staphylococcus haemolyticus (strain JCSC1435) protein is Oxygen regulatory protein NreC (nreC).